Reading from the N-terminus, the 942-residue chain is Lon protease homolog 4, chloroplastic/mitochondrial (942 aa).

A Phosphoserine modification is found at Ser54. Residues 79–301 (VIALPLPHKP…LTLELVKKEV (223 aa)) enclose the Lon N-terminal domain. 456 to 463 (GPTGVGKT) is an ATP binding site. Positions 673–725 (ISDDVTTDTEETKSLAKTDLESPETSAEGSTVLTDELATGDPTESTTEQSGEV) are disordered. Basic and acidic residues predominate over residues 682 to 692 (EETKSLAKTDL). The segment covering 695 to 705 (PETSAEGSTVL) has biased composition (polar residues). One can recognise a Lon proteolytic domain in the interval 756-940 (QTPVGVVMGL…EQIFELAFGY (185 aa)). Catalysis depends on residues Ser846 and Lys889.

The protein belongs to the peptidase S16 family. Homohexamer or homoheptamer. Organized in a ring with a central cavity.

The protein resides in the mitochondrion matrix. It is found in the plastid. The protein localises to the chloroplast thylakoid membrane. The catalysed reaction is Hydrolysis of proteins in presence of ATP.. Its function is as follows. ATP-dependent serine protease that mediates the selective degradation of misfolded, unassembled or oxidatively damaged polypeptides as well as certain short-lived regulatory proteins in the mitochondrial matrix. May also have a chaperone function in the assembly of inner membrane protein complexes. Participates in the regulation of mitochondrial gene expression and in the maintenance of the integrity of the mitochondrial genome. Binds to mitochondrial DNA in a site-specific manner. This is Lon protease homolog 4, chloroplastic/mitochondrial (LON4) from Arabidopsis thaliana (Mouse-ear cress).